The following is a 456-amino-acid chain: MTKKALSAVILAAGKGTRMYSDLPKVLHTIAGKPMVKHVIDTAHQLGSENIHLIYGHGGDLMRTHLANEQVNWVLQTEQLGTAHAVQQAAPFFKDNENIVVLYGDAPLITKETLEKLIEAKPENGIALLTVNLDNPTGYGRIIRENGNVVAIVEQKDANAEQLNIKEVNTGVMVSDGASFKKWLARVGNNNAQGEYYLTDLIALANQDNCQVVAVQATDVMEVEGANNRLQLAALERYFQNKQASKLLLEGVMIYDPARFDLRGTLEHGKDVEIDVNVIIEGNVKLGDRVKIGTGCVLKNVVIGNDVEIKPYSVLEDSIVGEKAAIGPFSRLRPGAELAAETHVGNFVEIKKSTVGKGSKVNHLTYVGDSEIGSNCNIGAGVITCNYDGANKFKTIIGDDVFVGSDTQLVAPVKVANGATIGAGTTITRDVGENELVITRVAQRHIQGWQRPIKKK.

Residues 1–229 (MTKKALSAVI…VMEVEGANNR (229 aa)) are pyrophosphorylase. Residues 11-14 (LAAG), lysine 25, glutamine 76, 81-82 (GT), 103-105 (YGD), glycine 140, glutamate 154, asparagine 169, and asparagine 227 each bind UDP-N-acetyl-alpha-D-glucosamine. Aspartate 105 is a Mg(2+) binding site. Asparagine 227 is a Mg(2+) binding site. A linker region spans residues 230 to 250 (LQLAALERYFQNKQASKLLLE). The interval 251–456 (GVMIYDPARF…QGWQRPIKKK (206 aa)) is N-acetyltransferase. The UDP-N-acetyl-alpha-D-glucosamine site is built by arginine 333 and lysine 351. The active-site Proton acceptor is the histidine 363. Tyrosine 366 and asparagine 377 together coordinate UDP-N-acetyl-alpha-D-glucosamine. Acetyl-CoA contacts are provided by residues alanine 380, 386–387 (NY), serine 405, alanine 423, and arginine 440.

It in the N-terminal section; belongs to the N-acetylglucosamine-1-phosphate uridyltransferase family. In the C-terminal section; belongs to the transferase hexapeptide repeat family. Homotrimer. It depends on Mg(2+) as a cofactor.

The protein localises to the cytoplasm. The catalysed reaction is alpha-D-glucosamine 1-phosphate + acetyl-CoA = N-acetyl-alpha-D-glucosamine 1-phosphate + CoA + H(+). The enzyme catalyses N-acetyl-alpha-D-glucosamine 1-phosphate + UTP + H(+) = UDP-N-acetyl-alpha-D-glucosamine + diphosphate. It participates in nucleotide-sugar biosynthesis; UDP-N-acetyl-alpha-D-glucosamine biosynthesis; N-acetyl-alpha-D-glucosamine 1-phosphate from alpha-D-glucosamine 6-phosphate (route II): step 2/2. The protein operates within nucleotide-sugar biosynthesis; UDP-N-acetyl-alpha-D-glucosamine biosynthesis; UDP-N-acetyl-alpha-D-glucosamine from N-acetyl-alpha-D-glucosamine 1-phosphate: step 1/1. Its pathway is bacterial outer membrane biogenesis; LPS lipid A biosynthesis. Catalyzes the last two sequential reactions in the de novo biosynthetic pathway for UDP-N-acetylglucosamine (UDP-GlcNAc). The C-terminal domain catalyzes the transfer of acetyl group from acetyl coenzyme A to glucosamine-1-phosphate (GlcN-1-P) to produce N-acetylglucosamine-1-phosphate (GlcNAc-1-P), which is converted into UDP-GlcNAc by the transfer of uridine 5-monophosphate (from uridine 5-triphosphate), a reaction catalyzed by the N-terminal domain. In Haemophilus influenzae (strain ATCC 51907 / DSM 11121 / KW20 / Rd), this protein is Bifunctional protein GlmU.